The following is a 207-amino-acid chain: Redox-sensing transcriptional repressor Rex (207 aa).

A DNA-binding region (H-T-H motif) is located at residues 17 to 56; that stretch reads IYLRYLSYLQQVEVTTVSSQQMGKNLDVNPAQIRKDLAAF. 91–96 lines the NAD(+) pocket; the sequence is GAGHLG.

This sequence belongs to the transcriptional regulatory Rex family. As to quaternary structure, homodimer.

Its subcellular location is the cytoplasm. Modulates transcription in response to changes in cellular NADH/NAD(+) redox state. In Brevibacillus brevis (strain 47 / JCM 6285 / NBRC 100599), this protein is Redox-sensing transcriptional repressor Rex.